The primary structure comprises 108 residues: MSGISLTPVKQENEPCSFLRHDSGSTQAVNDTYVDRARPSADAKEHCAASDPEEWHSGDRPPRLCRKPSRFYRRIVIPETAPVLSPRYDLSDEPHAPGTTMISGPRTQ.

The segment covering 1 to 10 has biased composition (polar residues); that stretch reads MSGISLTPVK. 2 disordered regions span residues 1–63 and 83–108; these read MSGI…RPPR and VLSP…PRTQ. Residues 33–62 show a composition bias toward basic and acidic residues; that stretch reads YVDRARPSADAKEHCAASDPEEWHSGDRPP.

This is an uncharacterized protein from Gallid herpesvirus 2 (strain Chicken/Md5/ATCC VR-987) (GaHV-2).